A 143-amino-acid polypeptide reads, in one-letter code: Hypoxic response protein 1 (143 aa).

2 CBS domains span residues 8 to 65 (MNAG…GLDP) and 73 to 131 (LARD…IVQF). Cys-14 and Cys-39 form a disulfide bridge. Residues His-97 and His-122 each coordinate Zn(2+).

In terms of assembly, homodimer.

The protein localises to the secreted. In terms of biological role, unlike some other CBS-domain containing proteins does not seem to bind AMP. This is Hypoxic response protein 1 (hrp1) from Mycobacterium tuberculosis (strain CDC 1551 / Oshkosh).